The chain runs to 89 residues: UPF0237 protein CPE1496 (89 aa).

An ACT domain is found at 4–84 (VITVVGKDKV…ISVQHEDIFN (81 aa)).

It belongs to the UPF0237 family.

This chain is UPF0237 protein CPE1496, found in Clostridium perfringens (strain 13 / Type A).